We begin with the raw amino-acid sequence, 329 residues long: tRNA pseudouridine synthase B (329 aa).

H43 lines the substrate pocket. The active-site Nucleophile is the D48. Y76, Y179, and L200 together coordinate substrate.

The protein belongs to the pseudouridine synthase TruB family. Type 1 subfamily.

The catalysed reaction is uridine(55) in tRNA = pseudouridine(55) in tRNA. In terms of biological role, responsible for synthesis of pseudouridine from uracil-55 in the psi GC loop of transfer RNAs. The protein is tRNA pseudouridine synthase B of Yersinia enterocolitica serotype O:8 / biotype 1B (strain NCTC 13174 / 8081).